Here is a 492-residue protein sequence, read N- to C-terminus: uncharacterized protein (492 aa).

Residue 266-273 (GIQGTGKS) participates in ATP binding.

It belongs to the AAA ATPase family. Highly divergent.

It is found in the plastid. The protein resides in the chloroplast. This is an uncharacterized protein from Pyropia yezoensis (Susabi-nori).